A 142-amino-acid polypeptide reads, in one-letter code: PDZ domain-containing protein 11 (142 aa).

The PDZ domain occupies 49–131; that stretch reads TIVLKKPPGA…ILMKVRYFPY (83 aa).

The protein resides in the cytoplasm. The sequence is that of PDZ domain-containing protein 11 (pdzd11) from Danio rerio (Zebrafish).